The sequence spans 155 residues: Nodulin-related protein 2 (155 aa).

M1 carries the N-acetylmethionine modification. Disordered regions lie at residues 1–37 and 85–155; these read MNFISDQVKKLSSSTPEEPDHNKPVEGTETATRPATN and DEKS…GFLK. Residues 95 to 106 are compositionally biased toward basic and acidic residues; the sequence is DKAEKYLNDYES. Over residues 120–130 the composition is skewed to low complexity; sequence SQAEPASQPEP.

Interacts with DEK3.

Its function is as follows. May be a negative regulator of the ABA signaling/synthesis pathway. In Arabidopsis thaliana (Mouse-ear cress), this protein is Nodulin-related protein 2.